The chain runs to 914 residues: MSQSQNAIFTSPTGEENLMNSNHRDSESITDVCSNEDLPEVELVSLLEEQLPQYRLKVDTLFLYENQDWTQSPHQRQHASDALSPVLAEETFRYMILGTDRVEQMTKTYNDIDMVTHLLAERDRDLELAARIGQALLKRNHVLSEQNESLEEQLGQAFDQVNQLQHELCKKDELLRIVSIASEESETDSSCSTPLRFNESFSLSQGLLQLEMLQEKLKELEEENMALRSKACHIKTETVTYEEKEQQLVSDCVKELRETNAQMSRMTEELSGKSDELIRYQEELSSLLSQIVDLQHKLKEHVIEKEELKLHLQASKDAQRQLTMELHELQDRNMECLGMLHESQEEIKELRSRSGPTAHLYFSQSYGAFTGESLAAEIEGTMRKKLSLDEESSLFKQKAQQKRVFDTVRIANDTRGRSISFPALLPIPGSNRSSVIMTAKPFESGLQQTEDKSLLNQGSSSEEVAGSSQKMGQPGPSGDSDLATALHRLSLRRQNYLSEKQFFAEEWQRKIQVLADQKEGVSGCVTPTESLASLCTTQSEITDLSSASCLRGFMPEKLQIVKPLEGSQTLYHWQQLAQPNLGTILDPRPGVITKGFTQLPGDAIYHISDLEEDEEEGITFQVQQPLEVEEKLSTSKPVTGIFLPPITSAGGPVTVATANPGKCLSCTNSTFTFTTCRILHPSDITQVTPSSGFPSLSCGSSGSSSSNTAVNSPALSYRLSIGESITNRRDSTTTFSSTMSLAKLLQERGISAKVYHSPISENPLQPLPKSLAIPSTPPNSPSHSPCPSPLPFEPRVHLSENFLASRPAETFLQEMYGLRPSRNPPDVGQLKMNLVDRLKRLGIARVVKNPGAQENGRCQEAEIGPQKPDSAVYLNSGSSLLGGLRRNQSLPVIMGSFAAPVCTSSPKMGVLKED.

Residues 1–21 (MSQSQNAIFTSPTGEENLMNS) are compositionally biased toward polar residues. The segment at 1–30 (MSQSQNAIFTSPTGEENLMNSNHRDSESIT) is disordered. The region spanning 48 to 353 (EEQLPQYRLK…QEEIKELRSR (306 aa)) is the HAP1 N-terminal domain. A coiled-coil region spans residues 134-354 (QALLKRNHVL…EEIKELRSRS (221 aa)). Positions 359 to 509 (HLYFSQSYGA…KQFFAEEWQR (151 aa)) are interaction with HGS. Residue serine 420 is modified to Phosphoserine. Disordered regions lie at residues 447–482 (QQTE…DSDL) and 765–787 (QPLP…SPCP). Positions 454–471 (LLNQGSSSEEVAGSSQKM) are enriched in polar residues. Over residues 775–787 (STPPNSPSHSPCP) the composition is skewed to pro residues.

It belongs to the milton family. Interacts with GABA-A receptor and O-GlcNAc transferase. Interacts with HGS. Interacts with RHOT1/Miro-1 and RHOT2/Miro-2. Post-translationally, O-glycosylated. Widely expressed, with highest expression in heart.

Its subcellular location is the cytoplasm. It localises to the early endosome. The protein resides in the mitochondrion. Functionally, may regulate endosome-to-lysosome trafficking of membrane cargo, including EGFR. The sequence is that of Trafficking kinesin-binding protein 2 (TRAK2) from Homo sapiens (Human).